The sequence spans 237 residues: 1-(5-phosphoribosyl)-5-[(5-phosphoribosylamino)methylideneamino] imidazole-4-carboxamide isomerase (237 aa).

D8 functions as the Proton acceptor in the catalytic mechanism. D129 acts as the Proton donor in catalysis.

It belongs to the HisA/HisF family.

It localises to the cytoplasm. The enzyme catalyses 1-(5-phospho-beta-D-ribosyl)-5-[(5-phospho-beta-D-ribosylamino)methylideneamino]imidazole-4-carboxamide = 5-[(5-phospho-1-deoxy-D-ribulos-1-ylimino)methylamino]-1-(5-phospho-beta-D-ribosyl)imidazole-4-carboxamide. It functions in the pathway amino-acid biosynthesis; L-histidine biosynthesis; L-histidine from 5-phospho-alpha-D-ribose 1-diphosphate: step 4/9. The chain is 1-(5-phosphoribosyl)-5-[(5-phosphoribosylamino)methylideneamino] imidazole-4-carboxamide isomerase from Clostridium botulinum (strain Alaska E43 / Type E3).